The chain runs to 103 residues: Small ribosomal subunit protein bS6c (103 aa).

This sequence belongs to the bacterial ribosomal protein bS6 family.

Its subcellular location is the plastid. The protein localises to the chloroplast. Functionally, binds together with bS18 to 16S ribosomal RNA. This is Small ribosomal subunit protein bS6c from Thalassiosira pseudonana (Marine diatom).